A 100-amino-acid polypeptide reads, in one-letter code: Osteocalcin (100 aa).

An N-terminal signal peptide occupies residues 1–23 (MRALTLLALLALATLCITGQAGA). The propeptide occupies 24 to 51 (KPSGAESSKGAAFVSKQEGSEVVKRPRR). One can recognise a Gla domain in the interval 52–98 (YLYQWLGAPAPYPDPLEPKREVCELNPDCDELADHIGFQEAYRRFYG). Position 60 is a 4-hydroxyproline (proline 60). Positions 68, 72, 75, and 81 each coordinate Ca(2+). 4-carboxyglutamate occurs at positions 68, 72, and 75. A disulfide bridge connects residues cysteine 74 and cysteine 80.

The protein belongs to the osteocalcin/matrix Gla protein family. Gamma-carboxyglutamate residues are formed by vitamin K dependent carboxylation by GGCX. These residues are essential for the binding of calcium. Decarboxylation promotes the hormone activity.

It localises to the secreted. In terms of biological role, the carboxylated form is one of the main organic components of the bone matrix, which constitutes 1-2% of the total bone protein: it acts as a negative regulator of bone formation and is required to limit bone formation without impairing bone resorption or mineralization. The carboxylated form binds strongly to apatite and calcium. Functionally, the uncarboxylated form acts as a hormone secreted by osteoblasts, which regulates different cellular processes, such as energy metabolism, male fertility and brain development. Regulates of energy metabolism by acting as a hormone favoring pancreatic beta-cell proliferation, insulin secretion and sensitivity and energy expenditure. Uncarboxylated osteocalcin hormone also promotes testosterone production in the testes: acts as a ligand for G protein-coupled receptor GPRC6A at the surface of Leydig cells, initiating a signaling response that promotes the expression of enzymes required for testosterone synthesis in a CREB-dependent manner. Also acts as a regulator of brain development: osteocalcin hormone crosses the blood-brain barrier and acts as a ligand for GPR158 on neurons, initiating a signaling response that prevents neuronal apoptosis in the hippocampus, favors the synthesis of all monoamine neurotransmitters and inhibits that of gamma-aminobutyric acid (GABA). Osteocalcin also crosses the placenta during pregnancy and maternal osteocalcin is required for fetal brain development. This is Osteocalcin (BGLAP) from Macaca mulatta (Rhesus macaque).